The following is a 560-amino-acid chain: Alpha-keto-acid decarboxylase (560 aa).

E61 serves as a coordination point for thiamine diphosphate. The segment at 396–478 is thiamine pyrophosphate binding; it reads TSFYGMADHR…VVVNNDGYTV (83 aa). Mg(2+)-binding residues include D446, N473, and G475.

The protein belongs to the TPP enzyme family. The cofactor is a metal cation. Requires thiamine diphosphate as cofactor.

In terms of biological role, decarboxylates branched-chain and aromatic alpha-keto acids to aldehydes. The protein is Alpha-keto-acid decarboxylase (kdc) of Mycobacterium bovis (strain ATCC BAA-935 / AF2122/97).